A 134-amino-acid chain; its full sequence is Large ribosomal subunit protein bL19 (134 aa).

Residues 110–134 (ARLHQEEGPSSAAPASTPPAAAPQA) are disordered. Positions 125 to 134 (STPPAAAPQA) are enriched in pro residues.

Belongs to the bacterial ribosomal protein bL19 family.

Functionally, this protein is located at the 30S-50S ribosomal subunit interface and may play a role in the structure and function of the aminoacyl-tRNA binding site. This Anaeromyxobacter sp. (strain Fw109-5) protein is Large ribosomal subunit protein bL19.